The chain runs to 202 residues: Regulator of G-protein signaling 16 (202 aa).

2 S-palmitoyl cysteine lipidation sites follow: cysteine 2 and cysteine 12. Positions 65–181 (SFDLLLSSKN…LKSPAYRDLA (117 aa)) constitute an RGS domain. Position 168 is a phosphotyrosine; by EGFR (tyrosine 168). Position 177 is a phosphotyrosine (tyrosine 177).

Interacts with GNAI1 and GNAQ. Interacts with GNAI2, GNAI3 and GNAO1. In terms of processing, palmitoylated on Cys-2 and/or Cys-12. Phosphorylated. Phosphorylation at Tyr-168 by EGFR enhances GTPase accelerating (GAP) activity toward GNAI1. Abundantly expressed in retina with lower levels of expression in most other tissues.

It localises to the membrane. Its function is as follows. Regulates G protein-coupled receptor signaling cascades. Inhibits signal transduction by increasing the GTPase activity of G protein alpha subunits, thereby driving them into their inactive GDP-bound form. Plays an important role in the phototransduction cascade by regulating the lifetime and effective concentration of activated transducin alpha. May regulate extra and intracellular mitogenic signals. The protein is Regulator of G-protein signaling 16 (RGS16) of Homo sapiens (Human).